Reading from the N-terminus, the 191-residue chain is Xanthine phosphoribosyltransferase (191 aa).

2 residues coordinate xanthine: leucine 20 and asparagine 27. A 5-phospho-alpha-D-ribose 1-diphosphate-binding site is contributed by 128–132; it reads ANGQA. Lysine 156 contributes to the xanthine binding site.

The protein belongs to the purine/pyrimidine phosphoribosyltransferase family. Xpt subfamily. Homodimer.

It is found in the cytoplasm. It carries out the reaction XMP + diphosphate = xanthine + 5-phospho-alpha-D-ribose 1-diphosphate. The protein operates within purine metabolism; XMP biosynthesis via salvage pathway; XMP from xanthine: step 1/1. In terms of biological role, converts the preformed base xanthine, a product of nucleic acid breakdown, to xanthosine 5'-monophosphate (XMP), so it can be reused for RNA or DNA synthesis. This chain is Xanthine phosphoribosyltransferase, found in Limosilactobacillus reuteri (strain DSM 20016) (Lactobacillus reuteri).